A 40-amino-acid polypeptide reads, in one-letter code: uncharacterized protein (40 aa).

This is an uncharacterized protein from Acheta domesticus (House cricket).